Reading from the N-terminus, the 625-residue chain is Glutamine--fructose-6-phosphate aminotransferase [isomerizing] (625 aa).

The active-site Nucleophile; for GATase activity is Cys2. Positions 2-229 (CGLVGYVGQR…QDQAVVITAD (228 aa)) constitute a Glutamine amidotransferase type-2 domain. 2 consecutive SIS domains span residues 298 to 437 (SDQE…ARGT) and 470 to 615 (LAYR…VDKP). Lys620 serves as the catalytic For Fru-6P isomerization activity.

Homodimer.

The protein resides in the cytoplasm. The enzyme catalyses D-fructose 6-phosphate + L-glutamine = D-glucosamine 6-phosphate + L-glutamate. Catalyzes the first step in hexosamine metabolism, converting fructose-6P into glucosamine-6P using glutamine as a nitrogen source. This Mycobacterium leprae (strain TN) protein is Glutamine--fructose-6-phosphate aminotransferase [isomerizing].